The following is a 400-amino-acid chain: Serine/threonine transporter SstT (400 aa).

A run of 8 helical transmembrane segments spans residues 14–34 (IIIA…VTPY), 48–68 (SVAP…FQVG), 76–96 (VLLL…IASL), 136–156 (AISE…GLAM), 177–197 (IIHK…AVTF), 211–231 (LLAV…PILV), 293–313 (LAGA…TLGI), and 334–354 (ASGV…LFGI).

The protein belongs to the dicarboxylate/amino acid:cation symporter (DAACS) (TC 2.A.23) family.

Its subcellular location is the cell inner membrane. The enzyme catalyses L-serine(in) + Na(+)(in) = L-serine(out) + Na(+)(out). The catalysed reaction is L-threonine(in) + Na(+)(in) = L-threonine(out) + Na(+)(out). Involved in the import of serine and threonine into the cell, with the concomitant import of sodium (symport system). The protein is Serine/threonine transporter SstT of Acinetobacter baumannii (strain SDF).